Consider the following 247-residue polypeptide: Coproheme decarboxylase (247 aa).

Fe-coproporphyrin III is bound by residues arginine 129, 143-147 (YPMDK), histidine 170, glutamine 183, and serine 221. Tyrosine 143 is an active-site residue.

This sequence belongs to the ChdC family. Type 1 subfamily. It depends on Fe-coproporphyrin III as a cofactor.

The enzyme catalyses Fe-coproporphyrin III + 2 H2O2 + 2 H(+) = heme b + 2 CO2 + 4 H2O. The catalysed reaction is Fe-coproporphyrin III + H2O2 + H(+) = harderoheme III + CO2 + 2 H2O. It catalyses the reaction harderoheme III + H2O2 + H(+) = heme b + CO2 + 2 H2O. It functions in the pathway porphyrin-containing compound metabolism; protoheme biosynthesis. Its function is as follows. Involved in coproporphyrin-dependent heme b biosynthesis. Catalyzes the decarboxylation of Fe-coproporphyrin III (coproheme) to heme b (protoheme IX), the last step of the pathway. The reaction occurs in a stepwise manner with a three-propionate intermediate. The protein is Coproheme decarboxylase of Bacillus cytotoxicus (strain DSM 22905 / CIP 110041 / 391-98 / NVH 391-98).